The chain runs to 80 residues: Ataxin-8 (80 aa).

Specifically found in brains from SCA8 patients (at protein level).

It is found in the nucleus. In Homo sapiens (Human), this protein is Ataxin-8 (ATXN8).